Here is a 388-residue protein sequence, read N- to C-terminus: MLAELPQPQNLTLLTLNTQYVLTWDWDQTTTGNSVSFTVEYMAKYKMKMKKKNWSRVCERTTRTRCDLTGSDLHYLGMYVLRVRASADGVDSDWVNKDFCPDIDASLGPPSRAELAPVGNLLDVTISDPLTSTQHSMKEHVLFLYYRILYWSRSDDPQGLKPKVLDSSNNLVTPPELEAWAWYCVMIQSRYDYYNKTSSYTEPQCMQTEGDTPYGQIFLYFLVSMMVCFLLVLLSSYAFFRFYRGLKNTFYPSIQLPAHIQEYLCDSSPGSDMPRLITADSEAELCCDKLTICPEVVLLEIHVPPPLTAPPSELEQDSGRHIRQDSGDSGIYSTEGGSAQQGRSGGEPIRRDQEVDSWQTLEQVKMEEMGRELADERDLDEGVVDVCV.

2 Fibronectin type-III domains span residues 5 to 102 and 109 to 211; these read LPQP…FCPD and PPSR…TEGD. The helical transmembrane segment at 217–237 threads the bilayer; it reads IFLYFLVSMMVCFLLVLLSSY. The segment at 308–357 is disordered; the sequence is TAPPSELEQDSGRHIRQDSGDSGIYSTEGGSAQQGRSGGEPIRRDQEVDS. Positions 317–326 are enriched in basic and acidic residues; it reads DSGRHIRQDS. The segment covering 331–342 has biased composition (polar residues); the sequence is IYSTEGGSAQQG.

It belongs to the type II cytokine receptor family. Heterodimer with IFNAR2; forming the receptor for type I interferon.

It is found in the cell membrane. Its subcellular location is the cytoplasm. The protein resides in the perinuclear region. Functionally, together with IFNAR2, forms the heterodimeric receptor for type I interferons (including interferons alpha, beta, epsilon, omega and kappa). Type I interferon binding activates the JAK-STAT signaling cascade, resulting in transcriptional activation or repression of interferon-regulated genes that encode the effectors of the interferon response. Mechanistically, type I interferon-binding brings the IFNAR1 and IFNAR2 subunits into close proximity with one another, driving their associated Janus kinases (JAKs) (TYK2 bound to IFNAR1 and JAK1 bound to IFNAR2) to cross-phosphorylate one another. The activated kinases phosphorylate specific tyrosine residues on the intracellular domains of IFNAR1 and IFNAR2, forming docking sites for the STAT transcription factors. STAT proteins are then phosphorylated by the JAKs, promoting their translocation into the nucleus to regulate expression of interferon-regulated genes. The sequence is that of Interferon alpha/beta receptor 1b from Oncorhynchus mykiss (Rainbow trout).